The sequence spans 572 residues: Outer spore wall assembly protein SHE10 (572 aa).

An N-terminal signal peptide occupies residues 1-19; it reads MRAISKLFVFTVLVLGSLQ. Coiled-coil stretches lie at residues 351–372 and 485–510; these read SQAN…REVV and FQER…LREQ. Residues 539-572 are disordered; it reads STSWSVPPADARAEPASGSPIQQAASEAAQQPSV. Positions 560–572 are enriched in low complexity; that stretch reads QQAASEAAQQPSV.

The protein belongs to the SHE10 family. In terms of assembly, component of the mitochondria-localized RNase mitochondrial RNA-processing (RNase MRP) composed of one single RNA encoded by the NME1 gene and at least 31 proteins. Absent in the nucleus-localized RNase MRP (NuMRP).

It localises to the mitochondrion. Involved in spore wall assembly. May be a component of the mitochondrial RNase MRP (MtMRP), a ribonucleoprotein endoribonuclease involved in the cleaving RNA transcripts to generate primers for DNA replication in mitochondria. This chain is Outer spore wall assembly protein SHE10, found in Eremothecium gossypii (strain ATCC 10895 / CBS 109.51 / FGSC 9923 / NRRL Y-1056) (Yeast).